We begin with the raw amino-acid sequence, 1383 residues long: NPC intracellular cholesterol transporter 1 homolog 1 (1383 aa).

Positions 1–20 are cleaved as a signal peptide; it reads MKQLLIFCLLFGSIFHHGDA. 8 disulfides stabilise this stretch: C22-C76, C28-C39, C65-C111, C77-C115, C99-C246, C102-C167, C182-C187, and C235-C251. N42 carries an N-linked (GlcNAc...) asparagine glycan. N231 carries an N-linked (GlcNAc...) asparagine glycan. Transmembrane regions (helical) follow at residues 282–302 and 353–373; these read IFVM…GFVF and PKSH…GMIY. N447 carries an N-linked (GlcNAc...) asparagine glycan. Intrachain disulfides connect C464–C474 and C526–C541. An N-linked (GlcNAc...) asparagine glycan is attached at N558. The next 6 helical transmembrane spans lie at 627 to 647, 665 to 685, 697 to 717, 746 to 766, 780 to 800, and 856 to 876; these read EIVT…FSLG, ICLG…SWGI, ALVV…FMVV, TMPA…IGGF, GLAV…LFVW, and IITG…SSKI. The SSD domain maps to 627 to 800; that stretch reads EIVTVVIALA…CTIFLALFVW (174 aa). Cystine bridges form between C929-C934, C976-C1046, C977-C1005, and C988-C1002. N-linked (GlcNAc...) asparagine glycans are attached at residues N993 and N1082. Helical transmembrane passes span 1126–1146, 1157–1177, 1179–1199, 1226–1246, and 1260–1280; these read IMPI…GIIC, ACAV…MYIF, IPVN…LIEF, IGPI…MFLS, and LFLI…PILL.

Belongs to the patched family.

It localises to the membrane. The catalysed reaction is cholesterol(in) = cholesterol(out). Its function is as follows. Involved in the uptake or utilization of cholesterol. Ncr-1 and ncr-2 act redundantly to prevent dauer larva formation under favorable growth conditions, and are required for the normal functioning of ADF, ASI and ASG neurons. This chain is NPC intracellular cholesterol transporter 1 homolog 1, found in Caenorhabditis elegans.